The sequence spans 201 residues: Proteasome subunit beta type-2 (201 aa).

M1 bears the N-acetylmethionine mark.

The protein belongs to the peptidase T1B family. The 26S proteasome consists of a 20S proteasome core and two 19S regulatory subunits. The 20S proteasome core is a barrel-shaped complex made of 28 subunits that are arranged in four stacked rings. The two outer rings are each formed by seven alpha subunits, and the two inner rings are formed by seven beta subunits. The proteolytic activity is exerted by three beta-subunits PSMB5, PSMB6 and PSMB7.

It is found in the cytoplasm. Its subcellular location is the nucleus. Functionally, non-catalytic component of the 20S core proteasome complex involved in the proteolytic degradation of most intracellular proteins. This complex plays numerous essential roles within the cell by associating with different regulatory particles. Associated with two 19S regulatory particles, forms the 26S proteasome and thus participates in the ATP-dependent degradation of ubiquitinated proteins. The 26S proteasome plays a key role in the maintenance of protein homeostasis by removing misfolded or damaged proteins that could impair cellular functions, and by removing proteins whose functions are no longer required. Associated with the PA200 or PA28, the 20S proteasome mediates ubiquitin-independent protein degradation. This type of proteolysis is required in several pathways including spermatogenesis (20S-PA200 complex) or generation of a subset of MHC class I-presented antigenic peptides (20S-PA28 complex). The polypeptide is Proteasome subunit beta type-2 (PSMB2) (Bos taurus (Bovine)).